Consider the following 231-residue polypeptide: ATP phosphoribosyltransferase (231 aa).

It belongs to the ATP phosphoribosyltransferase family. Short subfamily. Heteromultimer composed of HisG and HisZ subunits.

The protein resides in the cytoplasm. The enzyme catalyses 1-(5-phospho-beta-D-ribosyl)-ATP + diphosphate = 5-phospho-alpha-D-ribose 1-diphosphate + ATP. It functions in the pathway amino-acid biosynthesis; L-histidine biosynthesis; L-histidine from 5-phospho-alpha-D-ribose 1-diphosphate: step 1/9. Catalyzes the condensation of ATP and 5-phosphoribose 1-diphosphate to form N'-(5'-phosphoribosyl)-ATP (PR-ATP). Has a crucial role in the pathway because the rate of histidine biosynthesis seems to be controlled primarily by regulation of HisG enzymatic activity. The chain is ATP phosphoribosyltransferase from Psychrobacter arcticus (strain DSM 17307 / VKM B-2377 / 273-4).